Reading from the N-terminus, the 92-residue chain is DNA/RNA-binding protein Alba (92 aa).

K11 is modified (N6-acetyllysine).

Belongs to the histone-like Alba family. Post-translationally, acetylated. Acetylation at Lys-11 decreases DNA-binding affinity.

The protein resides in the cytoplasm. Its subcellular location is the chromosome. In terms of biological role, binds double-stranded DNA tightly but without sequence specificity. Involved in DNA compaction. The sequence is that of DNA/RNA-binding protein Alba from Pyrobaculum calidifontis (strain DSM 21063 / JCM 11548 / VA1).